Here is a 409-residue protein sequence, read N- to C-terminus: Argininosuccinate synthase (409 aa).

ATP-binding positions include 8–16 and alanine 34; that span reads AYSGGLDTS. Tyrosine 85 serves as a coordination point for L-citrulline. Glycine 115 provides a ligand contact to ATP. The L-aspartate site is built by threonine 117, asparagine 121, and aspartate 122. Residue asparagine 121 participates in L-citrulline binding. Residues arginine 125, serine 178, serine 187, glutamate 268, and tyrosine 280 each contribute to the L-citrulline site.

Belongs to the argininosuccinate synthase family. Type 1 subfamily. Homotetramer.

Its subcellular location is the cytoplasm. It carries out the reaction L-citrulline + L-aspartate + ATP = 2-(N(omega)-L-arginino)succinate + AMP + diphosphate + H(+). It functions in the pathway amino-acid biosynthesis; L-arginine biosynthesis; L-arginine from L-ornithine and carbamoyl phosphate: step 2/3. The chain is Argininosuccinate synthase from Thermotoga maritima (strain ATCC 43589 / DSM 3109 / JCM 10099 / NBRC 100826 / MSB8).